The sequence spans 365 residues: Aminomethyltransferase (365 aa).

The protein belongs to the GcvT family. In terms of assembly, the glycine cleavage system is composed of four proteins: P, T, L and H.

It catalyses the reaction N(6)-[(R)-S(8)-aminomethyldihydrolipoyl]-L-lysyl-[protein] + (6S)-5,6,7,8-tetrahydrofolate = N(6)-[(R)-dihydrolipoyl]-L-lysyl-[protein] + (6R)-5,10-methylene-5,6,7,8-tetrahydrofolate + NH4(+). Its function is as follows. The glycine cleavage system catalyzes the degradation of glycine. The protein is Aminomethyltransferase of Halalkalibacterium halodurans (strain ATCC BAA-125 / DSM 18197 / FERM 7344 / JCM 9153 / C-125) (Bacillus halodurans).